The chain runs to 154 residues: 6,7-dimethyl-8-ribityllumazine synthase (154 aa).

Residues F22, 56–58, and 80–82 contribute to the 5-amino-6-(D-ribitylamino)uracil site; these read AFE and AVI. A (2S)-2-hydroxy-3-oxobutyl phosphate-binding site is contributed by 85–86; it reads AT. The active-site Proton donor is the H88. 5-amino-6-(D-ribitylamino)uracil is bound at residue F113. Residue R127 participates in (2S)-2-hydroxy-3-oxobutyl phosphate binding.

The protein belongs to the DMRL synthase family.

It carries out the reaction (2S)-2-hydroxy-3-oxobutyl phosphate + 5-amino-6-(D-ribitylamino)uracil = 6,7-dimethyl-8-(1-D-ribityl)lumazine + phosphate + 2 H2O + H(+). It functions in the pathway cofactor biosynthesis; riboflavin biosynthesis; riboflavin from 2-hydroxy-3-oxobutyl phosphate and 5-amino-6-(D-ribitylamino)uracil: step 1/2. In terms of biological role, catalyzes the formation of 6,7-dimethyl-8-ribityllumazine by condensation of 5-amino-6-(D-ribitylamino)uracil with 3,4-dihydroxy-2-butanone 4-phosphate. This is the penultimate step in the biosynthesis of riboflavin. The protein is 6,7-dimethyl-8-ribityllumazine synthase of Clostridium botulinum (strain Okra / Type B1).